Consider the following 522-residue polypeptide: MKYKDLRDFVGRLETIGELRRISQTVSPVLEMTELCDRVLRAGGPALLFESKAQHAFPVLGNLFGTPRRVALGMGVDAQAGEGDGAALESLRDVGRLLSALKEPEPPKGLKDAGKLLSLAKAVWDMAPKTVSAPPCQEIVWEGNDVDLARLPIQTCWPGDAGPLITWGLTVTKGPNKPRQNLGIYRQQLIGRNKLIMRWLAHRGGALDFREFALQNPGKPYPVAVVLGADPATILGAVTPVPDTLSEYQFAGLLRGGRTELAKCLTPGVDGLQVPARAEIVLEGFIYPQEGAPSPAPAGAPPRPVKGASAAYEHALEGPYGDHTGYYNEQEWFPVFTVERITMRRDAIYHSTYTGKPPDEPAVLGVALNEVFVPLLQKQFTEITDFYLPPEGCSYRMAIVQMKKSYPGHAKRVMFGVWSFLRQFMYTKFIVVVDEDVNIRDWKEVIWAITTRIDPARDTVLVDRTPIDYLDFASPVAGLGSKMGLDATNKWPGETDREWGRPIVMDAAVKQRIDSLWNELGL.

Position 181 (Asn-181) interacts with Mn(2+). Prenylated FMN contacts are provided by residues 184-186 (IYR), 198-200 (RWL), and 203-204 (RG). A Mn(2+)-binding site is contributed by Glu-247. Asp-322 serves as the catalytic Proton donor.

It belongs to the UbiD family. As to quaternary structure, homohexamer. The cofactor is prenylated FMN. Mn(2+) is required as a cofactor.

The protein localises to the cell membrane. The catalysed reaction is a 4-hydroxy-3-(all-trans-polyprenyl)benzoate + H(+) = a 2-(all-trans-polyprenyl)phenol + CO2. Its pathway is cofactor biosynthesis; ubiquinone biosynthesis. Functionally, catalyzes the decarboxylation of 3-octaprenyl-4-hydroxy benzoate to 2-octaprenylphenol, an intermediate step in ubiquinone biosynthesis. This Paraburkholderia xenovorans (strain LB400) protein is 3-octaprenyl-4-hydroxybenzoate carboxy-lyase.